Reading from the N-terminus, the 363-residue chain is 3-isopropylmalate dehydrogenase (363 aa).

An NAD(+)-binding site is contributed by 78–91 (GPKWENLPPESQPE). R99, R109, R138, and D227 together coordinate substrate. 3 residues coordinate Mg(2+): D227, D251, and D255. Position 285–297 (285–297 (GSAPDIAGKNIAN)) interacts with NAD(+).

This sequence belongs to the isocitrate and isopropylmalate dehydrogenases family. LeuB type 1 subfamily. In terms of assembly, homodimer. It depends on Mg(2+) as a cofactor. Mn(2+) is required as a cofactor.

The protein localises to the cytoplasm. It catalyses the reaction (2R,3S)-3-isopropylmalate + NAD(+) = 4-methyl-2-oxopentanoate + CO2 + NADH. Its pathway is amino-acid biosynthesis; L-leucine biosynthesis; L-leucine from 3-methyl-2-oxobutanoate: step 3/4. Catalyzes the oxidation of 3-carboxy-2-hydroxy-4-methylpentanoate (3-isopropylmalate) to 3-carboxy-4-methyl-2-oxopentanoate. The product decarboxylates to 4-methyl-2 oxopentanoate. The chain is 3-isopropylmalate dehydrogenase from Salmonella typhi.